Here is a 577-residue protein sequence, read N- to C-terminus: Aspartate--tRNA(Asp/Asn) ligase (577 aa).

Position 171 (E171) interacts with L-aspartate. Residues 195 to 198 (QLFK) are aspartate. R217 contributes to the L-aspartate binding site. ATP is bound by residues 217-219 (RDE) and Q226. H444 provides a ligand contact to L-aspartate. E474 is an ATP binding site. R481 is an L-aspartate binding site. 526-529 (GFDR) provides a ligand contact to ATP.

It belongs to the class-II aminoacyl-tRNA synthetase family. Type 1 subfamily. As to quaternary structure, homodimer.

Its subcellular location is the cytoplasm. The catalysed reaction is tRNA(Asx) + L-aspartate + ATP = L-aspartyl-tRNA(Asx) + AMP + diphosphate. Its function is as follows. Aspartyl-tRNA synthetase with relaxed tRNA specificity since it is able to aspartylate not only its cognate tRNA(Asp) but also tRNA(Asn). Reaction proceeds in two steps: L-aspartate is first activated by ATP to form Asp-AMP and then transferred to the acceptor end of tRNA(Asp/Asn). This Helicobacter pylori (strain G27) protein is Aspartate--tRNA(Asp/Asn) ligase.